Reading from the N-terminus, the 421-residue chain is MYKKISMNDKEIEHAINNEVDRQNEHIELIASENYVSEDVLTAVGSVLTNKYGEGYPGKRYYGGCENVDVVETLAIERLKKLFGVKFANVQPYSGSVANAAALATLASQGDKIMGLDLASGGHLTHGYKISFSGIFYNSITYSVNEDGILDYEAIKELAIKEKPKVIICGYSAYSRIVDFKKFREIADACGAKLMADIAHIAGLIAGGVHPSPVPYADIITSTTHKTLRGARGAIIMTNDVEIAKKMNRWVFPGYQGGPLFHAIAGKAVAFGEALKPEYAAYAKSVVYNAREFSNYFIKQGVSIVSGGTDNHLFTINVNKSYGISGLQAEKILGKFNITVNKNTVPFDELSPAVTSGIRIGTAAMSSRKFAKWKELGAIMHEILQNCVEFSENESKHLDRIAELKKQVEALTTEFPIITKY.

(6S)-5,6,7,8-tetrahydrofolate contacts are provided by residues Leu-118 and 122–124 (GHL). Position 226 is an N6-(pyridoxal phosphate)lysine (Lys-226).

The protein belongs to the SHMT family. Homodimer. Pyridoxal 5'-phosphate is required as a cofactor.

It localises to the cytoplasm. It catalyses the reaction (6R)-5,10-methylene-5,6,7,8-tetrahydrofolate + glycine + H2O = (6S)-5,6,7,8-tetrahydrofolate + L-serine. Its pathway is one-carbon metabolism; tetrahydrofolate interconversion. It functions in the pathway amino-acid biosynthesis; glycine biosynthesis; glycine from L-serine: step 1/1. In terms of biological role, catalyzes the reversible interconversion of serine and glycine with tetrahydrofolate (THF) serving as the one-carbon carrier. This reaction serves as the major source of one-carbon groups required for the biosynthesis of purines, thymidylate, methionine, and other important biomolecules. Also exhibits THF-independent aldolase activity toward beta-hydroxyamino acids, producing glycine and aldehydes, via a retro-aldol mechanism. The protein is Serine hydroxymethyltransferase of Mycoplasmopsis agalactiae (strain NCTC 10123 / CIP 59.7 / PG2) (Mycoplasma agalactiae).